A 300-amino-acid polypeptide reads, in one-letter code: UPF0761 membrane protein PSHAa0171 (300 aa).

Transmembrane regions (helical) follow at residues 47–67, 100–120, 143–163, 181–201, 215–235, and 249–269; these read LLSL…FPGF, NANQ…LLLI, FAVY…SIAV, FSGF…FIML, AIPG…GFAL, and AVAT…VVLL.

It belongs to the UPF0761 family.

The protein resides in the cell inner membrane. The protein is UPF0761 membrane protein PSHAa0171 of Pseudoalteromonas translucida (strain TAC 125).